Reading from the N-terminus, the 393-residue chain is Phosphoglycerate kinase (393 aa).

Substrate-binding positions include 21–23 (DLN), Arg36, 59–62 (HLGR), Arg113, and Arg146. Residues Lys197, Glu319, and 345-348 (GGDT) each bind ATP.

This sequence belongs to the phosphoglycerate kinase family. Monomer.

It localises to the cytoplasm. It catalyses the reaction (2R)-3-phosphoglycerate + ATP = (2R)-3-phospho-glyceroyl phosphate + ADP. Its pathway is carbohydrate degradation; glycolysis; pyruvate from D-glyceraldehyde 3-phosphate: step 2/5. This Nitratidesulfovibrio vulgaris (strain DP4) (Desulfovibrio vulgaris) protein is Phosphoglycerate kinase.